The sequence spans 786 residues: Exo-beta-D-glucosaminidase (786 aa).

Substrate-binding positions include Y53, 102–103, 178–179, E306, E347, and Y379; these read GE and DE. E179 functions as the Proton donor in the catalytic mechanism. E347 acts as the Nucleophile in catalysis.

It belongs to the glycosyl hydrolase 35 family. As to quaternary structure, homodimer.

It is found in the cytoplasm. The enzyme catalyses beta-D-glucosaminyl-(1-&gt;4)-N-acetyl-D-glucosamine + H2O = D-glucosamine + N-acetyl-D-glucosamine. It functions in the pathway glycan degradation; chitin degradation. Exo-type enzyme that specifically cleaves the non-reducing terminal glycosidic bond of chitooligosaccharides. Catalyzes the hydrolysis of GlcN-GlcNAc to glucosamine (GlcN) and N-acetylglucosamine (GlcNAc). Involved in chitin degradation. Can also hydrolyze reduced chitobiose (GlcN2OH) and chitooligosaccharides of various chain lengths. This is Exo-beta-D-glucosaminidase from Thermococcus kodakarensis (strain ATCC BAA-918 / JCM 12380 / KOD1) (Pyrococcus kodakaraensis (strain KOD1)).